The primary structure comprises 85 residues: UPF0335 protein WP0746 (85 aa).

The protein belongs to the UPF0335 family.

The chain is UPF0335 protein WP0746 from Wolbachia pipientis subsp. Culex pipiens (strain wPip).